Consider the following 72-residue polypeptide: MSLGVIAAAIAIGLSALGAGIGNGLIVSRTIEGVARQPELKGALQTIMFIGVALVEALPIIGVVIAFIVMNK.

A run of 2 helical transmembrane segments spans residues 1-21 (MSLGVIAAAIAIGLSALGAGI) and 49-69 (FIGVALVEALPIIGVVIAFIV).

The protein belongs to the ATPase C chain family. In terms of assembly, F-type ATPases have 2 components, F(1) - the catalytic core - and F(0) - the membrane proton channel. F(1) has five subunits: alpha(3), beta(3), gamma(1), delta(1), epsilon(1). F(0) has three main subunits: a(1), b(2) and c(10-14). The alpha and beta chains form an alternating ring which encloses part of the gamma chain. F(1) is attached to F(0) by a central stalk formed by the gamma and epsilon chains, while a peripheral stalk is formed by the delta and b chains.

Its subcellular location is the cell membrane. In terms of biological role, f(1)F(0) ATP synthase produces ATP from ADP in the presence of a proton or sodium gradient. F-type ATPases consist of two structural domains, F(1) containing the extramembraneous catalytic core and F(0) containing the membrane proton channel, linked together by a central stalk and a peripheral stalk. During catalysis, ATP synthesis in the catalytic domain of F(1) is coupled via a rotary mechanism of the central stalk subunits to proton translocation. Key component of the F(0) channel; it plays a direct role in translocation across the membrane. A homomeric c-ring of between 10-14 subunits forms the central stalk rotor element with the F(1) delta and epsilon subunits. The protein is ATP synthase subunit c of Bacillus anthracis (strain A0248).